We begin with the raw amino-acid sequence, 494 residues long: UDP-N-acetylmuramate--L-alanine ligase (494 aa).

134–140 (GSHGKTT) is a binding site for ATP.

Belongs to the MurCDEF family.

Its subcellular location is the cytoplasm. The catalysed reaction is UDP-N-acetyl-alpha-D-muramate + L-alanine + ATP = UDP-N-acetyl-alpha-D-muramoyl-L-alanine + ADP + phosphate + H(+). It functions in the pathway cell wall biogenesis; peptidoglycan biosynthesis. Functionally, cell wall formation. The chain is UDP-N-acetylmuramate--L-alanine ligase from Prochlorococcus marinus (strain NATL1A).